We begin with the raw amino-acid sequence, 368 residues long: 3-isopropylmalate dehydrogenase (368 aa).

79-91 (GPEWGTSSTVRPE) is an NAD(+) binding site. Substrate contacts are provided by R98, R108, R137, and D226. Mg(2+) contacts are provided by D226, D251, and D255. Residue 291–303 (GSAPDISGKGIVN) participates in NAD(+) binding.

This sequence belongs to the isocitrate and isopropylmalate dehydrogenases family. Homodimer. Mg(2+) serves as cofactor. The cofactor is Mn(2+).

The protein resides in the cytoplasm. The catalysed reaction is (2R,3S)-3-isopropylmalate + NAD(+) = 4-methyl-2-oxopentanoate + CO2 + NADH. The protein operates within amino-acid biosynthesis; L-leucine biosynthesis; L-leucine from 3-methyl-2-oxobutanoate: step 3/4. Catalyzes the oxidation of 3-carboxy-2-hydroxy-4-methylpentanoate (3-isopropylmalate) to 3-carboxy-4-methyl-2-oxopentanoate. The product decarboxylates to 4-methyl-2 oxopentanoate. The polypeptide is 3-isopropylmalate dehydrogenase (LEU1) (Sordaria macrospora).